The following is a 311-amino-acid chain: Endosome-associated-trafficking regulator 1 (311 aa).

The stretch at 167–278 forms a coiled coil; sequence RGNAENGTKN…KSENERLRLG (112 aa).

It belongs to the ENTR1 family.

Its subcellular location is the cytoplasm. The protein resides in the early endosome. It is found in the endosome. It localises to the recycling endosome. The protein localises to the midbody. Its subcellular location is the cytoskeleton. The protein resides in the microtubule organizing center. It is found in the centrosome. It localises to the cilium basal body. Endosome-associated protein that plays a role in membrane receptor sorting, cytokinesis and ciliogenesis. In Danio rerio (Zebrafish), this protein is Endosome-associated-trafficking regulator 1.